Consider the following 207-residue polypeptide: Acyl-homoserine-lactone synthase (207 aa).

It belongs to the autoinducer synthase family.

It catalyses the reaction a fatty acyl-[ACP] + S-adenosyl-L-methionine = an N-acyl-L-homoserine lactone + S-methyl-5'-thioadenosine + holo-[ACP] + H(+). In terms of biological role, required for the synthesis of N-butanoyl-L-homoserine lactone (BHL), an autoinducer molecule which binds to AsaR. This is Acyl-homoserine-lactone synthase (asaI) from Aeromonas salmonicida.